The following is a 248-amino-acid chain: Probable transcriptional regulatory protein FTL_0929 (248 aa).

This sequence belongs to the TACO1 family.

The protein localises to the cytoplasm. This chain is Probable transcriptional regulatory protein FTL_0929, found in Francisella tularensis subsp. holarctica (strain LVS).